The chain runs to 424 residues: 2,3-bisphosphoglycerate-independent phosphoglycerate mutase (424 aa).

It belongs to the BPG-independent phosphoglycerate mutase family. A-PGAM subfamily.

It carries out the reaction (2R)-2-phosphoglycerate = (2R)-3-phosphoglycerate. The protein operates within carbohydrate degradation; glycolysis; pyruvate from D-glyceraldehyde 3-phosphate: step 3/5. Catalyzes the interconversion of 2-phosphoglycerate and 3-phosphoglycerate. The protein is 2,3-bisphosphoglycerate-independent phosphoglycerate mutase of Aeropyrum pernix (strain ATCC 700893 / DSM 11879 / JCM 9820 / NBRC 100138 / K1).